The primary structure comprises 591 residues: Probable translation initiation factor IF-2 (591 aa).

One can recognise a tr-type G domain in the interval 7 to 223; that stretch reads LRTPIVCVMG…LLGLAQKFLE (217 aa). The segment at 16-23 is G1; that stretch reads GHVDHGKT. 16-23 is a GTP binding site; it reads GHVDHGKT. Positions 41-45 are G2; the sequence is AITQH. The segment at 78-81 is G3; that stretch reads DTPG. GTP is bound by residues 78–82 and 132–135; these read DTPGH and NKID. The interval 132-135 is G4; that stretch reads NKID. The tract at residues 200–202 is G5; the sequence is SAF.

It belongs to the TRAFAC class translation factor GTPase superfamily. Classic translation factor GTPase family. IF-2 subfamily.

Functionally, function in general translation initiation by promoting the binding of the formylmethionine-tRNA to ribosomes. Seems to function along with eIF-2. This chain is Probable translation initiation factor IF-2, found in Methanosarcina mazei (strain ATCC BAA-159 / DSM 3647 / Goe1 / Go1 / JCM 11833 / OCM 88) (Methanosarcina frisia).